Consider the following 390-residue polypeptide: Elongation factor Tu 2 (390 aa).

Residues 10-201 (KPHVNVGTIG…LDEYVAVPPR (192 aa)) enclose the tr-type G domain. Residues 19–26 (GHVDHGKT) form a G1 region. 19–26 (GHVDHGKT) provides a ligand contact to GTP. Threonine 26 contributes to the Mg(2+) binding site. Residues 55–59 (GITIA) are G2. The tract at residues 76–79 (DCPG) is G3. Residues 76 to 80 (DCPGH) and 131 to 134 (NKAD) contribute to the GTP site. The interval 131 to 134 (NKAD) is G4. A G5 region spans residues 168-170 (SAL).

This sequence belongs to the TRAFAC class translation factor GTPase superfamily. Classic translation factor GTPase family. EF-Tu/EF-1A subfamily. As to quaternary structure, monomer.

The protein resides in the cytoplasm. It catalyses the reaction GTP + H2O = GDP + phosphate + H(+). Its function is as follows. GTP hydrolase that promotes the GTP-dependent binding of aminoacyl-tRNA to the A-site of ribosomes during protein biosynthesis. This is Elongation factor Tu 2 from Wolbachia pipientis wMel.